Reading from the N-terminus, the 473-residue chain is Maltose fermentation regulatory protein MAL63 (473 aa).

The segment at residues 8–34 (CDCCRVRRVKCDRNKPCNRCIQRNLNC) is a DNA-binding region (zn(2)-C6 fungal-type). Positions 41–49 (KKRGPKSIR) match the Nuclear localization signal motif.

This sequence belongs to the MAL13 family.

The protein resides in the nucleus. Functionally, regulates the coordinate transcription of structural MAL6S (maltase) and MAL6T (maltose permease) genes. The polypeptide is Maltose fermentation regulatory protein MAL63 (MAL63) (Saccharomyces cerevisiae (Baker's yeast)).